We begin with the raw amino-acid sequence, 468 residues long: Hexokinase (468 aa).

The 457-residue stretch at 10 to 466 (AKQLAELEVV…SGKGAALIAD (457 aa)) folds into the Hexokinase domain. The interval 74–225 (TGAEVGEAYA…NVPAVCKAIV (152 aa)) is hexokinase small subdomain. 85–90 (DFGGST) contacts ATP. Positions 163–189 (PVGFTFSFPCAQAALNSSFLIEWTKGF) are glucose-binding. The segment at 226–455 (NDTVGTLVSC…KNIHYCIADD (230 aa)) is hexokinase large subdomain.

Belongs to the hexokinase family.

It carries out the reaction a D-hexose + ATP = a D-hexose 6-phosphate + ADP + H(+). The enzyme catalyses D-mannose + ATP = D-mannose 6-phosphate + ADP + H(+). It catalyses the reaction D-fructose + ATP = D-fructose 6-phosphate + ADP + H(+). The catalysed reaction is D-glucose + ATP = D-glucose 6-phosphate + ADP + H(+). It participates in carbohydrate metabolism; hexose metabolism. The protein operates within carbohydrate degradation; glycolysis; D-glyceraldehyde 3-phosphate and glycerone phosphate from D-glucose: step 1/4. Functionally, catalyzes the phosphorylation of various hexoses to hexose 6-phosphate. The polypeptide is Hexokinase (HXK) (Toxoplasma gondii).